The chain runs to 270 residues: Transcriptional regulator BrlR (270 aa).

Methionine 1 provides a ligand contact to 3',3'-c-di-GMP. The HTH merR-type domain maps to 1-71; sequence MLTIGQLARI…LEAIDRLKRD (71 aa). The H-T-H motif DNA-binding region spans 4–23; it reads IGQLARIFEISTKTLRHYDA. 3',3'-c-di-GMP is bound by residues arginine 31, serine 34, aspartate 35, tyrosine 40, arginine 67, arginine 70, arginine 86, and tyrosine 270. The interval 120–270 is involved in effector-binding, probably including pyocyanine-binding; the sequence is MHARIVERPA…SQVDLYIPIY (151 aa).

As to quaternary structure, monomer. Homodimer; dimer formation enhanced in the presence of the second messenger, cyclic di-GMP (c-di-GMP). Homotetramer; dimer of dimers, arranged in a head-to-tail fashion, which may reduce DNA-binding ability. Conformational changes upon binding c-di-GMP or pyocyanine may facilitate DNA binding.

Functionally, transcriptional regulator. Responsive to the second messenger cyclic di-GMP (c-di-GMP) and to the virulence factor pyocyanine, which both enhance gene expression and promoter DNA binding of BrlR. Activates expression of operons encoding the multidrug efflux pumps MexAB-OprM and MexEF-OprN and several ABC transport systems, acting by direct binding to their respective promoters. Also acts as a repressor of the two component regulatory system, PhoPQ. Binds to promoter of its own gene. Contributes to the antimicrobial tolerance exhibited by biofilms, acting, at least in part, by activating expression of multidrug efflux pumps and ABC transporters. This Pseudomonas aeruginosa (strain ATCC 15692 / DSM 22644 / CIP 104116 / JCM 14847 / LMG 12228 / 1C / PRS 101 / PAO1) protein is Transcriptional regulator BrlR.